We begin with the raw amino-acid sequence, 360 residues long: Tryptophan--tRNA ligase, mitochondrial (360 aa).

A mitochondrion-targeting transit peptide spans 1 to 18 (MALHSMRKARERWSFIRA). Residues glutamine 42 and 48-51 (HLGN) contribute to the ATP site. An L-tryptophan-binding site is contributed by aspartate 167. Residues 179–181 (GED), valine 217, and 226–230 (KMSKS) contribute to the ATP site.

Belongs to the class-I aminoacyl-tRNA synthetase family. In terms of tissue distribution, brain.

It localises to the mitochondrion matrix. Its subcellular location is the mitochondrion. It catalyses the reaction tRNA(Trp) + L-tryptophan + ATP = L-tryptophyl-tRNA(Trp) + AMP + diphosphate + H(+). Its function is as follows. Catalyzes the attachment of tryptophan to tRNA(Trp) in a two-step reaction: tryptophan is first activated by ATP to form Trp-AMP and then transferred to the acceptor end of tRNA(Trp). This chain is Tryptophan--tRNA ligase, mitochondrial (WARS2), found in Homo sapiens (Human).